Reading from the N-terminus, the 207-residue chain is Transcriptional regulatory protein RcsA (207 aa).

The 66-residue stretch at 131–196 folds into the HTH luxR-type domain; the sequence is LTLPTLSLSK…VIYHIVRLTE (66 aa). The segment at residues 155–174 is a DNA-binding region (H-T-H motif); sequence TSQISTQMNIKAKTVSSHKG.

The protein belongs to the RcsA family.

Component of the Rcs signaling system, which controls transcription of numerous genes. Binds to DNA to regulate expression of genes. The protein is Transcriptional regulatory protein RcsA of Klebsiella aerogenes (Enterobacter aerogenes).